Consider the following 733-residue polypeptide: 1,4-alpha-glucan branching enzyme GlgB (733 aa).

D413 serves as the catalytic Nucleophile. E466 functions as the Proton donor in the catalytic mechanism.

It belongs to the glycosyl hydrolase 13 family. GlgB subfamily. Monomer.

It catalyses the reaction Transfers a segment of a (1-&gt;4)-alpha-D-glucan chain to a primary hydroxy group in a similar glucan chain.. It participates in glycan biosynthesis; glycogen biosynthesis. Catalyzes the formation of the alpha-1,6-glucosidic linkages in glycogen by scission of a 1,4-alpha-linked oligosaccharide from growing alpha-1,4-glucan chains and the subsequent attachment of the oligosaccharide to the alpha-1,6 position. The chain is 1,4-alpha-glucan branching enzyme GlgB from Leifsonia xyli subsp. xyli (strain CTCB07).